A 571-amino-acid chain; its full sequence is Methionine--tRNA ligase (571 aa).

Positions 10 to 20 (PYVNAVPHLGN) match the 'HIGH' region motif. Residues C143, C146, C156, and C159 each coordinate Zn(2+). The 'KMSKS' region signature appears at 333 to 337 (KFSKS). Residue K336 participates in ATP binding.

This sequence belongs to the class-I aminoacyl-tRNA synthetase family. MetG type 1 subfamily. Requires Zn(2+) as cofactor.

The protein resides in the cytoplasm. It carries out the reaction tRNA(Met) + L-methionine + ATP = L-methionyl-tRNA(Met) + AMP + diphosphate. Is required not only for elongation of protein synthesis but also for the initiation of all mRNA translation through initiator tRNA(fMet) aminoacylation. This chain is Methionine--tRNA ligase, found in Sulfurisphaera tokodaii (strain DSM 16993 / JCM 10545 / NBRC 100140 / 7) (Sulfolobus tokodaii).